Reading from the N-terminus, the 456-residue chain is ATP-dependent protease ATPase subunit HslU (456 aa).

ATP is bound by residues V18, 60–65 (GVGKTE), D269, E334, and R406.

The protein belongs to the ClpX chaperone family. HslU subfamily. As to quaternary structure, a double ring-shaped homohexamer of HslV is capped on each side by a ring-shaped HslU homohexamer. The assembly of the HslU/HslV complex is dependent on binding of ATP.

The protein localises to the cytoplasm. ATPase subunit of a proteasome-like degradation complex; this subunit has chaperone activity. The binding of ATP and its subsequent hydrolysis by HslU are essential for unfolding of protein substrates subsequently hydrolyzed by HslV. HslU recognizes the N-terminal part of its protein substrates and unfolds these before they are guided to HslV for hydrolysis. The chain is ATP-dependent protease ATPase subunit HslU from Desulfosudis oleivorans (strain DSM 6200 / JCM 39069 / Hxd3) (Desulfococcus oleovorans).